A 686-amino-acid chain; its full sequence is Heat shock 70 kDa protein 12B (686 aa).

The disordered stretch occupies residues 12-53 (LYIGSSPERSPVPSPPGSPRTQESCGIAPLTPSQSPKPEVRA). Residues Ser25 and Ser29 each carry the phosphoserine modification. At Thr42 the chain carries Phosphothreonine. Phosphoserine occurs at positions 44, 46, and 276.

Belongs to the heat shock protein 70 family. Highest expression in muscle and heart. Lower levels in liver and kidney.

In Homo sapiens (Human), this protein is Heat shock 70 kDa protein 12B (HSPA12B).